The chain runs to 44 residues: Homeobox protein DLX-1 (44 aa).

The segment at 19 to 44 (RALSAGSPPVPPGWNRIPPLGRAQEE) is disordered.

The protein belongs to the distal-less homeobox family. In terms of assembly, interacts with SMAD4 (via homeobox DNA-binding domain). Interacts (via homeobox DNA-binding domain) with POU4F2; this interaction suppresses DLX1-mediated transcriptional activity in postnatal retina and enhances retinal ganglion cell (RGC) differentiation.

It localises to the nucleus. Plays a role as a transcriptional activator or repressor. Inhibits several cytokine signaling pathways, such as TGFB1, activin-A/INHBA and BMP4 by interfering with the transcriptional stimulatory activity of transcription factors, such as MSX2, FAST2, SMAD2 and SMAD3 during hematopoietic cell differentiation. Plays a role in terminal differentiation of interneurons, such as amacrine and bipolar cells in the developing retina. Likely to play a regulatory role in the development of the ventral forebrain. May play a role in craniofacial patterning and morphogenesis and may be involved in the early development of diencephalic subdivisions. This is Homeobox protein DLX-1 (Dlx1) from Rattus norvegicus (Rat).